The sequence spans 535 residues: 2-(3-amino-3-carboxypropyl)histidine synthase subunit 2 (535 aa).

Positions 107, 128, and 342 each coordinate [4Fe-4S] cluster. A compositionally biased stretch (basic and acidic residues) spans 390-401 (NDKPEDASKESE). Disordered regions lie at residues 390-471 (NDKP…QQND) and 512-535 (ASTL…SGRH). A compositionally biased stretch (acidic residues) spans 404-424 (VAEEEVEFEDVAGGVEGEESA). The segment covering 449–471 (NPSTTAETEANSDGQPTSTQQND) has biased composition (polar residues).

This sequence belongs to the DPH1/DPH2 family. DPH2 subfamily. Component of the 2-(3-amino-3-carboxypropyl)histidine synthase complex composed of DPH1, DPH2, DPH3 and a NADH-dependent reductase, predominantly CBR1. Requires [4Fe-4S] cluster as cofactor.

The protein resides in the cytoplasm. It functions in the pathway protein modification; peptidyl-diphthamide biosynthesis. Functionally, required for the first step of diphthamide biosynthesis, a post-translational modification of histidine which occurs in elongation factor 2. DPH1 and DPH2 transfer a 3-amino-3-carboxypropyl (ACP) group from S-adenosyl-L-methionine (SAM) to a histidine residue, the reaction is assisted by a reduction system comprising DPH3 and a NADH-dependent reductase, predominantly CBR1. Facilitates the reduction of the catalytic iron-sulfur cluster found in the DPH1 subunit. In Gibberella zeae (strain ATCC MYA-4620 / CBS 123657 / FGSC 9075 / NRRL 31084 / PH-1) (Wheat head blight fungus), this protein is 2-(3-amino-3-carboxypropyl)histidine synthase subunit 2 (DPH2).